Consider the following 583-residue polypeptide: Putative amidase C869.01 (583 aa).

A signal peptide spans 1 to 19; it reads MKLQLLFLTLAQLAKHGLA. Catalysis depends on charge relay system residues lysine 141 and serine 222. Serine 246 (acyl-ester intermediate) is an active-site residue.

Belongs to the amidase family.

It is found in the cytoplasm. It catalyses the reaction a monocarboxylic acid amide + H2O = a monocarboxylate + NH4(+). The polypeptide is Putative amidase C869.01 (Schizosaccharomyces pombe (strain 972 / ATCC 24843) (Fission yeast)).